The primary structure comprises 163 residues: Large ribosomal subunit protein uL11 (163 aa).

A disordered region spans residues 1–25; that stretch reads MAGTIEVLVAGGQADPGPPLGPELG.

Belongs to the universal ribosomal protein uL11 family. In terms of assembly, part of the ribosomal stalk of the 50S ribosomal subunit. Interacts with L10 and the large rRNA to form the base of the stalk. L10 forms an elongated spine to which L12 dimers bind in a sequential fashion forming a multimeric L10(L12)X complex.

Its function is as follows. Forms part of the ribosomal stalk which helps the ribosome interact with GTP-bound translation factors. The polypeptide is Large ribosomal subunit protein uL11 (Natronomonas pharaonis (strain ATCC 35678 / DSM 2160 / CIP 103997 / JCM 8858 / NBRC 14720 / NCIMB 2260 / Gabara) (Halobacterium pharaonis)).